We begin with the raw amino-acid sequence, 947 residues long: ATPase 10, plasma membrane-type (947 aa).

The Cytoplasmic portion of the chain corresponds to 1 to 69 (MAEDLDKPLL…EKQENRFVKF (69 aa)). A helical membrane pass occupies residues 70–89 (LGFMWNPLSWVMEAAALMAI). Topologically, residues 90–101 (ALANSQSLGPDW) are extracellular. A helical transmembrane segment spans residues 102–122 (EDFTGIVCLLLINATISFFEE). The Cytoplasmic segment spans residues 123–251 (NNAGNAAAAL…GHFQQVLTSI (129 aa)). A helical transmembrane segment spans residues 252 to 272 (GNFCICSIAVGMVLEIIIMFP). Residues 273-281 (VQHRSYRIG) are Extracellular-facing. A helical membrane pass occupies residues 282 to 299 (INNLLVLLIGGIPIAMPT). Residues 300 to 650 (VLSVTLAIGS…TSRAIFQRMR (351 aa)) are Cytoplasmic-facing. Asp-337 (4-aspartylphosphate intermediate) is an active-site residue. Residues Asp-595 and Asp-599 each coordinate Mg(2+). The helical transmembrane segment at 651–672 (NYTVYAVSITIRIVLGFTLLAL) threads the bilayer. At 673 to 677 (IWEYD) the chain is on the extracellular side. A helical membrane pass occupies residues 678 to 700 (FPPFMVLIIAILNDGTIMTISKD). Residues 701–716 (RVRPSPTPESWKLNQI) are Cytoplasmic-facing. The chain crosses the membrane as a helical span at residues 717–737 (FATGIVIGTYLALVTVLFYWI). The Extracellular portion of the chain corresponds to 738-758 (IVSTTFFEKHFHVKSIANNSE). The helical transmembrane segment at 759–779 (QVSSAMYLQVSIISQALIFVT) threads the bilayer. Residues 780–791 (RSRGWSFFERPG) are Cytoplasmic-facing. The helical transmembrane segment at 792–812 (TLLIFAFILAQLAATLIAVYA) threads the bilayer. Over 813–820 (NISFAKIT) the chain is Extracellular. A helical membrane pass occupies residues 821–841 (GIGWRWAGVIWLYSLIFYIPL). The Cytoplasmic portion of the chain corresponds to 842–947 (DVIKFVFHYA…QRMIRAAHTV (106 aa)). Phosphoserine occurs at positions 897 and 929. The residue at position 946 (Thr-946) is a Phosphothreonine.

It belongs to the cation transport ATPase (P-type) (TC 3.A.3) family. Type IIIA subfamily. Found primarily in developing seeds. Expressed in guard cells, mesophyll cells, leaves and roots.

Its subcellular location is the membrane. The catalysed reaction is ATP + H2O + H(+)(in) = ADP + phosphate + 2 H(+)(out). Its function is as follows. The plasma membrane H(+) ATPase of plants and fungi generates a proton gradient that drives the active transport of nutrients by H(+)-symport. The resulting external acidification and/or internal alkinization may mediate growth responses. This Arabidopsis thaliana (Mouse-ear cress) protein is ATPase 10, plasma membrane-type (AHA10).